The primary structure comprises 200 residues: Somatotropin (200 aa).

Residues 1–22 (MARVLVVLSVVVASLFFSQGAT) form the signal peptide. Residue His-38 participates in Zn(2+) binding. Cys-71 and Cys-173 are disulfide-bonded. Zn(2+) is bound at residue Glu-182. A disulfide bond links Cys-190 and Cys-198.

Belongs to the somatotropin/prolactin family.

The protein resides in the secreted. Growth hormone plays an important role in growth control and is involved in the regulation of several anabolic processes. Implicated as an osmoregulatory substance important for seawater adaptation. This Heteropneustes fossilis (Stinging catfish) protein is Somatotropin (gh).